A 399-amino-acid polypeptide reads, in one-letter code: Exodeoxyribonuclease 7 large subunit (399 aa).

It belongs to the XseA family. In terms of assembly, heterooligomer composed of large and small subunits.

It is found in the cytoplasm. The catalysed reaction is Exonucleolytic cleavage in either 5'- to 3'- or 3'- to 5'-direction to yield nucleoside 5'-phosphates.. In terms of biological role, bidirectionally degrades single-stranded DNA into large acid-insoluble oligonucleotides, which are then degraded further into small acid-soluble oligonucleotides. The sequence is that of Exodeoxyribonuclease 7 large subunit from Clostridium botulinum (strain Eklund 17B / Type B).